We begin with the raw amino-acid sequence, 252 residues long: Phosphomannomutase (252 aa).

Aspartate 13 acts as the Nucleophile in catalysis. Mg(2+) is bound by residues aspartate 13 and aspartate 15. Aspartate 15 serves as the catalytic Proton donor/acceptor. Alpha-D-mannose 1-phosphate contacts are provided by arginine 22, arginine 124, arginine 135, arginine 142, serine 180, and aspartate 182. Mg(2+) is bound by residues aspartate 208, tyrosine 220, and threonine 225.

Belongs to the eukaryotic PMM family. As to quaternary structure, homodimer. Mg(2+) is required as a cofactor. In terms of tissue distribution, expressed in roots, leaves, stems and flowers.

It is found in the cytoplasm. It catalyses the reaction alpha-D-mannose 1-phosphate = D-mannose 6-phosphate. Its pathway is nucleotide-sugar biosynthesis; GDP-alpha-D-mannose biosynthesis; alpha-D-mannose 1-phosphate from D-fructose 6-phosphate: step 2/2. Its function is as follows. Catalyzes the interconversion of mannose-6-phosphate to mannose-1-phosphate, the precursor for the synthesis of GDP-mannose. GDP-mannose is an essential sugar nucleotide for the synthesis of D-mannose-containing cell wall polysaccharides (galactomannans and glucomannans), glycolipids, glycoproteins and the antioxidant L-ascorbate. Involved in the biosynthesis of ascorbate and polysaccharides in response to abiotic stress during seed germination. This chain is Phosphomannomutase, found in Dendrobium officinale (Orchid).